Reading from the N-terminus, the 445-residue chain is MGKKDKRSKLEGDDLAEAQQKGSFQLPSSNETAKLDASQWPLLLKNYDKLNVRTNHYTPHVEGVSPLKRDIKNYISSGFFNLDKPSNPSSHEVVSWIKRILRCEKTGHSGTLDPKVSGCLIVCIDRTTRLAKSQQGAGKEYICIFKLHEEVEDDRKVKQALEKLTGALFQRPPLISAVKRQLRIRTVYENKFIEYDPAQQMGIFNCICESGTYVRTICVHLGLILGCGGQMQELRRNRSGICDENENMVTMHDVLDAQYLLDTQKDESYMRHIVRPLEALLTQHKRVVVKDSCINAICYGAKILIPGILRYDDDIEVGKEIVIMSTKGEAICIAIAQMNTSTIASVDHGVVAKSKRVIMERDVYGRKWGLGPVASKKKQMVKDGLLDKFGKPNDTTPKSWAKEYVQTSTKKEVKKEETPDEEEEEAPKKKSKKSKKQESSDSDSD.

Residues 1–32 (MGKKDKRSKLEGDDLAEAQQKGSFQLPSSNET) form a disordered region. Residues 20–32 (QKGSFQLPSSNET) show a composition bias toward polar residues. The active-site Nucleophile is the aspartate 113. The region spanning 284–359 (HKRVVVKDSC…VVAKSKRVIM (76 aa)) is the PUA domain. Residues 386–445 (LDKFGKPNDTTPKSWAKEYVQTSTKKEVKKEETPDEEEEEAPKKKSKKSKKQESSDSDSD) form a disordered region.

Belongs to the pseudouridine synthase TruB family. As to quaternary structure, component of the small nucleolar ribonucleoprotein particle containing H/ACA-type snoRNAs (H/ACA snoRNPs).

It is found in the nucleus. The protein resides in the nucleolus. The enzyme catalyses a uridine in RNA = a pseudouridine in RNA. Functionally, plays a central role in ribosomal RNA processing. Probable catalytic subunit of H/ACA small nucleolar ribonucleoprotein (H/ACA snoRNP) complex, which catalyzes pseudouridylation of rRNA. This involves the isomerization of uridine such that the ribose is subsequently attached to C5, instead of the normal N1. Pseudouridine ('psi') residues may serve to stabilize the conformation of rRNAs. The sequence is that of Putative H/ACA ribonucleoprotein complex subunit 4 from Caenorhabditis elegans.